We begin with the raw amino-acid sequence, 504 residues long: ATP synthase subunit alpha (504 aa).

Residue 169-176 (GDRKTGKT) coordinates ATP.

Belongs to the ATPase alpha/beta chains family. In terms of assembly, F-type ATPases have 2 components, CF(1) - the catalytic core - and CF(0) - the membrane proton channel. CF(1) has five subunits: alpha(3), beta(3), gamma(1), delta(1), epsilon(1). CF(0) has three main subunits: a(1), b(2) and c(9-12). The alpha and beta chains form an alternating ring which encloses part of the gamma chain. CF(1) is attached to CF(0) by a central stalk formed by the gamma and epsilon chains, while a peripheral stalk is formed by the delta and b chains.

It localises to the cell membrane. The catalysed reaction is ATP + H2O + 4 H(+)(in) = ADP + phosphate + 5 H(+)(out). Functionally, produces ATP from ADP in the presence of a proton gradient across the membrane. The alpha chain is a regulatory subunit. This Leuconostoc citreum (strain KM20) protein is ATP synthase subunit alpha.